A 269-amino-acid chain; its full sequence is Phosphonoacetaldehyde hydrolase (269 aa).

The Nucleophile role is filled by Asp9. Residues Asp9 and Ala11 each contribute to the Mg(2+) site. Residue Lys50 is the Schiff-base intermediate with substrate of the active site. Asp184 provides a ligand contact to Mg(2+).

Belongs to the HAD-like hydrolase superfamily. PhnX family. In terms of assembly, homodimer. It depends on Mg(2+) as a cofactor.

It catalyses the reaction phosphonoacetaldehyde + H2O = acetaldehyde + phosphate + H(+). Functionally, involved in phosphonate degradation. This is Phosphonoacetaldehyde hydrolase from Lysinibacillus sphaericus (strain C3-41).